Here is a 506-residue protein sequence, read N- to C-terminus: Protein MGF 505-4R (506 aa).

This sequence belongs to the asfivirus MGF 505 family.

Functionally, plays a role in virus cell tropism, and may be required for efficient virus replication in macrophages. This is Protein MGF 505-4R from Ornithodoros (relapsing fever ticks).